A 541-amino-acid polypeptide reads, in one-letter code: Membrane protein insertase YidC (541 aa).

The next 5 membrane-spanning stretches (helical) occupy residues 6 to 26, 349 to 369, 420 to 440, 457 to 477, and 500 to 520; these read NILL…WQAD, FVGN…GLLF, GGCL…WVLL, LSVQ…MFVM, and VIFT…WLVG.

This sequence belongs to the OXA1/ALB3/YidC family. Type 1 subfamily. Interacts with the Sec translocase complex via SecD. Specifically interacts with transmembrane segments of nascent integral membrane proteins during membrane integration.

The protein resides in the cell inner membrane. In terms of biological role, required for the insertion and/or proper folding and/or complex formation of integral membrane proteins into the membrane. Involved in integration of membrane proteins that insert both dependently and independently of the Sec translocase complex, as well as at least some lipoproteins. Aids folding of multispanning membrane proteins. The chain is Membrane protein insertase YidC from Shewanella sp. (strain MR-7).